We begin with the raw amino-acid sequence, 476 residues long: WD repeat, SAM and U-box domain-containing protein 1 (476 aa).

WD repeat units lie at residues 10 to 47 (DHSDDVNCCAFSSSCLATCSLDKTIRIYSLNDFTELPY), 52 to 91 (GHTYAVHCCCFSPSGHTLASCSTDGATIIWDTSDGRMLAV), 95 to 134 (PTGSPVRVCRFSPESTYLVSGAADGSVVLWNVHSMKFYRS), 137 to 176 (VKDGSLVACAFSPGGNFFVTGSSCGDLTVWDDKMRCLCNE), 178 to 227 (AHDL…FLGG), 237 to 276 (GHSAPVLTCAFSYDGQMLVSGSVDKCVIIYETNTGNILHT), and 279 to 318 (QHTRYVTTCAFAPCSLFLATGSMDKTVHIWKLDNKQPCAG). The SAM domain occupies 333-396 (WSEDDVSAWL…LQKIEELRMK (64 aa)). The U-box domain maps to 403 to 476 (AVPDEFLCPI…ISRWLETQQK (74 aa)).

This is WD repeat, SAM and U-box domain-containing protein 1 (WDSUB1) from Gallus gallus (Chicken).